Consider the following 837-residue polypeptide: MMKRSNEGIGGENYASSPSDDGQQKRRKIQFEPVRMPAVSNVNDIRARAVVYQTSKLKQQLLYKNKRIAELEKENERSKRRQQTDESNFLKVYNMFSDIEKYICTQTKNEFGEYIGGDTAPTGIDVLGMTNETYNKFFDQAKQNLRNAFVSYAKARHDRAHESTIFIDKLKTLIDSPTFNPNGVHKELTAKAASLAIQNEKLQSEVTKVQSDCYNLERKKRILTDKLSVQENRVQELEHQLEDARFETDKHMRLANKFEYKLATLVSEGQSGGNGGATPSSSGTTNATEKKISAPDIPPSETAAKEIENLRLERDEQESIASRRLQDLEEMNKKVQTLTQENSKLRLETQTFFSVDSIVNSEEYKNLKKYYSLAIKEYERVSKDLEDITTERDAFRSAKEARAMLMSEEHQKTLKEIQCQSDIHNSFYKVSHDSEVLRCEFETVKEEYNKTVKQSEWDEMKATLNTLRSMNRSLKSEKIRLREKDKQSQKDINTLKSELTSLKEAQDKCLLVPLEDVSNAPPEDVNKIRQEYESLCKEVKRLGAMEKQEKQKQVENLQKEVNRQIADKLSELETLRKTNEMLTNDEECISDELEAIGTAVEEEQERNAQLYIEKREQEDRNLKMMNDRMIQNQTFNRLREKLSCLESKAQTDAQIAKMHEFEKKANEELVTKLSESVQFKSAELTRLTNLMEQHRKNIQEVGMSRDENQIKADRCEGQMKQIQELYAAKAREIEDFKFKRQRAEEELETLRIKYERVKRNESVPAQSGDQVLEEANRQMKETLTCPSCKTRPKDCIMLKCYHLFCETCIKTMYDTRQRKCPKCNSNFGANDFHRIFI.

Residues 1–33 (MMKRSNEGIGGENYASSPSDDGQQKRRKIQFEP) form a disordered region. Residues 1-313 (MMKRSNEGIG…AKEIENLRLE (313 aa)) are interaction with ubc-1. Coiled coils occupy residues 54 to 89 (TSKL…ESNF) and 185 to 253 (HKEL…KHMR). Residues 269 to 302 (GQSGGNGGATPSSSGTTNATEKKISAPDIPPSET) are disordered. Residues 277-287 (ATPSSSGTTNA) show a composition bias toward polar residues. 3 coiled-coil regions span residues 300 to 397 (SETA…AFRS), 458 to 651 (DEMK…KAQT), and 677 to 763 (VQFK…NESV). The segment at 785 to 824 (CPSCKTRPKDCIMLKCYHLFCETCIKTMYDTRQRKCPKCN) adopts an RING-type zinc-finger fold.

Belongs to the BRE1 family. As to quaternary structure, interacts with ubc-1. Interacts with mrg-1. In adult animals, expressed in oocytes, germ cells, pharyngeal and intestinal cells.

It is found in the nucleus. It catalyses the reaction S-ubiquitinyl-[E2 ubiquitin-conjugating enzyme]-L-cysteine + [acceptor protein]-L-lysine = [E2 ubiquitin-conjugating enzyme]-L-cysteine + N(6)-ubiquitinyl-[acceptor protein]-L-lysine.. It participates in protein modification; protein ubiquitination. Functionally, E3 ubiquitin-protein ligase that mediates monoubiquitination of 'Lys-117' of histone H2B. H2B 'Lys-117' ubiquitination gives a specific tag for epigenetic transcriptional activation and is also prerequisite for histone H3 'Lys-4' and 'Lys-79' methylation. Involved in regulating stem cell proliferative fate. In Caenorhabditis elegans, this protein is E3 ubiquitin-protein ligase bre-1 (rfp-1).